A 528-amino-acid chain; its full sequence is Probable serine protease HtrA1 (528 aa).

Residues 1–70 (MDTRVDTDNA…RPSGVQGSFV (70 aa)) form a disordered region. Topologically, residues 1–178 (MDTRVDTDNA…DVLFGGKVSY (178 aa)) are cytoplasmic. The segment covering 31-40 (NNGGPNGGGR) has biased composition (gly residues). Residues 179 to 199 (LALGILVAIALVIGGIGGVIG) form a helical membrane-spanning segment. Residues 200–528 (RKTAEVVDAF…LTVKPDPDST (329 aa)) are Periplasmic-facing. Catalysis depends on charge relay system residues H270, D306, and S387. Residues 426–487 (LVANSLIKDG…VIVKVGNRAV (62 aa)) form the PDZ domain.

It belongs to the peptidase S1C family. As to quaternary structure, the C-terminal region exhibits both monomeric and trimeric forms in solution.

Its subcellular location is the cell inner membrane. It carries out the reaction Acts on substrates that are at least partially unfolded. The cleavage site P1 residue is normally between a pair of hydrophobic residues, such as Val-|-Val.. Essential protein that may act as a regulatory protease that is conditionally activated upon appropriate environmental triggers. This chain is Probable serine protease HtrA1, found in Mycobacterium tuberculosis (strain ATCC 25618 / H37Rv).